Consider the following 264-residue polypeptide: Thymidylate synthase (264 aa).

Arginine 21 contacts dUMP. Histidine 51 lines the (6R)-5,10-methylene-5,6,7,8-tetrahydrofolate pocket. 126-127 (RR) contributes to the dUMP binding site. Catalysis depends on cysteine 146, which acts as the Nucleophile. DUMP contacts are provided by residues 166-169 (RSAD), asparagine 177, and 207-209 (HLY). Residue aspartate 169 coordinates (6R)-5,10-methylene-5,6,7,8-tetrahydrofolate. Residue alanine 263 coordinates (6R)-5,10-methylene-5,6,7,8-tetrahydrofolate.

The protein belongs to the thymidylate synthase family. Bacterial-type ThyA subfamily. As to quaternary structure, homodimer.

The protein resides in the cytoplasm. It carries out the reaction dUMP + (6R)-5,10-methylene-5,6,7,8-tetrahydrofolate = 7,8-dihydrofolate + dTMP. Its pathway is pyrimidine metabolism; dTTP biosynthesis. Catalyzes the reductive methylation of 2'-deoxyuridine-5'-monophosphate (dUMP) to 2'-deoxythymidine-5'-monophosphate (dTMP) while utilizing 5,10-methylenetetrahydrofolate (mTHF) as the methyl donor and reductant in the reaction, yielding dihydrofolate (DHF) as a by-product. This enzymatic reaction provides an intracellular de novo source of dTMP, an essential precursor for DNA biosynthesis. The chain is Thymidylate synthase from Rhizobium johnstonii (strain DSM 114642 / LMG 32736 / 3841) (Rhizobium leguminosarum bv. viciae).